Here is a 122-residue protein sequence, read N- to C-terminus: Large ribosomal subunit protein bL12 (122 aa).

Belongs to the bacterial ribosomal protein bL12 family. As to quaternary structure, homodimer. Part of the ribosomal stalk of the 50S ribosomal subunit. Forms a multimeric L10(L12)X complex, where L10 forms an elongated spine to which 2 to 4 L12 dimers bind in a sequential fashion. Binds GTP-bound translation factors.

Functionally, forms part of the ribosomal stalk which helps the ribosome interact with GTP-bound translation factors. Is thus essential for accurate translation. The protein is Large ribosomal subunit protein bL12 of Buchnera aphidicola subsp. Cinara cedri (strain Cc).